The sequence spans 1142 residues: Fibronectin type-III domain-containing protein 3A (1142 aa).

A disordered region spans residues Tyr-104 to Gln-191. Residues Val-107–Met-145 are compositionally biased toward basic and acidic residues. Residues Ser-146–Pro-158 are compositionally biased toward low complexity. Phosphoserine occurs at positions 147, 151, and 157. Fibronectin type-III domains follow at residues Asn-212 to Cys-313, Ile-317 to Cys-409, Met-413 to Asp-506, Ile-510 to Val-604, Pro-608 to Gly-701, Gln-705 to Ser-795, Glu-805 to Leu-894, Pro-895 to Ser-989, and Val-990 to Pro-1095. An N6-acetyllysine modification is found at Lys-328. The helical transmembrane segment at Asn-1121 to Ile-1141 threads the bilayer.

Belongs to the FNDC3 family.

The protein resides in the golgi apparatus membrane. In terms of biological role, mediates spermatid-Sertoli adhesion during spermatogenesis. This is Fibronectin type-III domain-containing protein 3A (FNDC3A) from Pongo abelii (Sumatran orangutan).